A 207-amino-acid chain; its full sequence is Putative 3-methyladenine DNA glycosylase (207 aa).

This sequence belongs to the DNA glycosylase MPG family.

The protein is Putative 3-methyladenine DNA glycosylase of Listeria welshimeri serovar 6b (strain ATCC 35897 / DSM 20650 / CCUG 15529 / CIP 8149 / NCTC 11857 / SLCC 5334 / V8).